We begin with the raw amino-acid sequence, 132 residues long: Global transcriptional regulator Spx (132 aa).

Cys10 and Cys13 are disulfide-bonded.

Belongs to the ArsC family. Spx subfamily. In terms of assembly, interacts with the C-terminal domain of the alpha subunit of the RNAP.

The protein localises to the cytoplasm. Its function is as follows. Global transcriptional regulator that plays a key role in stress response and exerts either positive or negative regulation of genes. Acts by interacting with the C-terminal domain of the alpha subunit of the RNA polymerase (RNAP). This interaction can enhance binding of RNAP to the promoter region of target genes and stimulate their transcription, or block interaction of RNAP with activator. In Lactiplantibacillus plantarum (strain ATCC BAA-793 / NCIMB 8826 / WCFS1) (Lactobacillus plantarum), this protein is Global transcriptional regulator Spx.